A 1251-amino-acid polypeptide reads, in one-letter code: ATP-dependent helicase/nuclease subunit A (1251 aa).

Residues 5–481 enclose the UvrD-like helicase ATP-binding domain; the sequence is TKWTDEQWEA…IILSRNFRSR (477 aa). 26-33 provides a ligand contact to ATP; sequence AAAGAGKT. Positions 526–824 constitute a UvrD-like helicase C-terminal domain; it reads TVGGEVEFHL…RIMSIHKSKG (299 aa). Residues 544-565 form a disordered region; sequence NFTFENEGEEGRQADEGEEDEE.

It belongs to the helicase family. AddA subfamily. In terms of assembly, heterodimer of AddA and AddB/RexB. It depends on Mg(2+) as a cofactor.

The enzyme catalyses Couples ATP hydrolysis with the unwinding of duplex DNA by translocating in the 3'-5' direction.. It carries out the reaction ATP + H2O = ADP + phosphate + H(+). Functionally, the heterodimer acts as both an ATP-dependent DNA helicase and an ATP-dependent, dual-direction single-stranded exonuclease. Recognizes the chi site generating a DNA molecule suitable for the initiation of homologous recombination. The AddA nuclease domain is required for chi fragment generation; this subunit has the helicase and 3' -&gt; 5' nuclease activities. The sequence is that of ATP-dependent helicase/nuclease subunit A from Acetivibrio thermocellus (strain ATCC 27405 / DSM 1237 / JCM 9322 / NBRC 103400 / NCIMB 10682 / NRRL B-4536 / VPI 7372) (Clostridium thermocellum).